The sequence spans 86 residues: Exodeoxyribonuclease 7 small subunit (86 aa).

It belongs to the XseB family. Heterooligomer composed of large and small subunits.

Its subcellular location is the cytoplasm. The catalysed reaction is Exonucleolytic cleavage in either 5'- to 3'- or 3'- to 5'-direction to yield nucleoside 5'-phosphates.. Its function is as follows. Bidirectionally degrades single-stranded DNA into large acid-insoluble oligonucleotides, which are then degraded further into small acid-soluble oligonucleotides. The polypeptide is Exodeoxyribonuclease 7 small subunit (Xanthomonas oryzae pv. oryzae (strain MAFF 311018)).